The following is a 464-amino-acid chain: NADH dehydrogenase [ubiquinone] flavoprotein 1, mitochondrial (464 aa).

A mitochondrion-targeting transit peptide spans 1–20 (MLATRRLLGWSLPARVSVRF). Lys81 is subject to N6-acetyllysine; alternate. Lys81 is modified (N6-succinyllysine; alternate). NADH is bound at residue 87-96 (GRGGAGFPTG). N6-acetyllysine is present on Lys104. Position 199–247 (199–247 (RGAGAYICGEETALIESIEGKQGKPRLKPPFPADVGVFGCPTTVANVET)) interacts with FMN. Arg257 carries the omega-N-methylarginine modification. The residue at position 375 (Lys375) is an N6-acetyllysine. 4 residues coordinate [4Fe-4S] cluster: Cys379, Cys382, Cys385, and Cys425.

The protein belongs to the complex I 51 kDa subunit family. Core subunit of respiratory chain NADH dehydrogenase (Complex I) which is composed of 45 different subunits. This is a component of the flavoprotein-sulfur (FP) fragment of the enzyme. Interacts with RAB5IF. It depends on FMN as a cofactor. Requires [4Fe-4S] cluster as cofactor.

The protein resides in the mitochondrion inner membrane. The enzyme catalyses a ubiquinone + NADH + 5 H(+)(in) = a ubiquinol + NAD(+) + 4 H(+)(out). Its function is as follows. Core subunit of the mitochondrial membrane respiratory chain NADH dehydrogenase (Complex I) which catalyzes electron transfer from NADH through the respiratory chain, using ubiquinone as an electron acceptor. Part of the peripheral arm of the enzyme, where the electrons from NADH are accepted by flavin mononucleotide (FMN) and then passed along a chain of iron-sulfur clusters by electron tunnelling to the final acceptor ubiquinone. Contains FMN, which is the initial electron acceptor as well as one iron-sulfur cluster. In Homo sapiens (Human), this protein is NADH dehydrogenase [ubiquinone] flavoprotein 1, mitochondrial.